We begin with the raw amino-acid sequence, 235 residues long: Large ribosomal subunit protein uL1 (235 aa).

Belongs to the universal ribosomal protein uL1 family. In terms of assembly, part of the 50S ribosomal subunit.

Its function is as follows. Binds directly to 23S rRNA. The L1 stalk is quite mobile in the ribosome, and is involved in E site tRNA release. In terms of biological role, protein L1 is also a translational repressor protein, it controls the translation of the L11 operon by binding to its mRNA. This Methylibium petroleiphilum (strain ATCC BAA-1232 / LMG 22953 / PM1) protein is Large ribosomal subunit protein uL1.